The following is a 215-amino-acid chain: MRVRNKPWAKGYMADHLDRLVVEPEPLKGNWQSRFPSNQPLFVEIGTGKGQFIIEMARQHPDRNFIGIEIQTSVIAVALKGVVNSGLTNIQLVHTDGEAINTFFEAGEVSGLYLNFSDPWPKKRHTKRRLTSPVFLAHYADVLQPEGQLQFKTDNRGLFEYSLGSLNNFGMVFEGVWLDLHAATDGVEDIQTEYEQKFSKKGPIYQVIAHFPTNN.

Positions 44, 69, 96, and 118 each coordinate S-adenosyl-L-methionine. The active site involves D118. Substrate is bound by residues K122, D154, and 192–195 (TEYE).

Belongs to the class I-like SAM-binding methyltransferase superfamily. TrmB family.

It carries out the reaction guanosine(46) in tRNA + S-adenosyl-L-methionine = N(7)-methylguanosine(46) in tRNA + S-adenosyl-L-homocysteine. Its pathway is tRNA modification; N(7)-methylguanine-tRNA biosynthesis. Functionally, catalyzes the formation of N(7)-methylguanine at position 46 (m7G46) in tRNA. In Levilactobacillus brevis (strain ATCC 367 / BCRC 12310 / CIP 105137 / JCM 1170 / LMG 11437 / NCIMB 947 / NCTC 947) (Lactobacillus brevis), this protein is tRNA (guanine-N(7)-)-methyltransferase.